The following is a 243-amino-acid chain: Undecaprenyl-phosphate mannosyltransferase (243 aa).

The protein belongs to the glycosyltransferase 2 family.

It carries out the reaction di-trans,octa-cis-undecaprenyl phosphate + GDP-alpha-D-mannose = D-mannosyl di-trans,octa-cis-undecaprenyl phosphate + GDP. Functionally, catalyzes the transfer of mannose from GDP-mannose to D-mannosyl-1-phosphoundecaprenol. The polypeptide is Undecaprenyl-phosphate mannosyltransferase (Micrococcus luteus (strain ATCC 4698 / DSM 20030 / JCM 1464 / CCM 169 / CCUG 5858 / IAM 1056 / NBRC 3333 / NCIMB 9278 / NCTC 2665 / VKM Ac-2230) (Micrococcus lysodeikticus)).